A 1214-amino-acid polypeptide reads, in one-letter code: Lysine-specific demethylase 3A (1214 aa).

A phosphoserine mark is found at Ser150 and Ser209. Residues 194–211 (TPSSNRQQNTPQAANSPP) are compositionally biased toward polar residues. 3 disordered regions span residues 194–215 (TPSS…NIGA), 271–293 (PKGS…STPQ), and 310–398 (KAEL…KSVL). Ser330 is subject to Phosphoserine. A compositionally biased stretch (polar residues) spans 361–370 (LGSQSQNLKE). Residues 371–380 (TSVKVDHDSC) are compositionally biased toward basic and acidic residues. Over residues 381–391 (CTRSSNKTQTP) the composition is skewed to polar residues. A C6-type zinc finger spans residues 546–571 (CDVCDTTIFNLHWVCPRCGFGVCVDC). The LXXLL motif motif lies at 769–773 (LRNLL). The residue at position 779 (Lys779) is an N6-acetyllysine. The 224-residue stretch at 944 to 1167 (MPSRFDDLMA…HCFWLTQEFR (224 aa)) folds into the JmjC domain. His1006, Asp1008, and His1135 together coordinate Fe cation.

The protein belongs to the JHDM2 histone demethylase family. As to quaternary structure, interacts with VRK1. Requires Fe(2+) as cofactor. In terms of tissue distribution, testis specific. Expressed only in male germ cells.

Its subcellular location is the cytoplasm. The protein resides in the nucleus. The catalysed reaction is N(6),N(6)-dimethyl-L-lysyl(9)-[histone H3] + 2 2-oxoglutarate + 2 O2 = L-lysyl(9)-[histone H3] + 2 formaldehyde + 2 succinate + 2 CO2. Histone demethylase that specifically demethylates 'Lys-9' of histone H3, thereby playing a central role in histone code. Preferentially demethylates mono- and dimethylated H3 'Lys-9' residue, with a preference for dimethylated residue, while it has weak or no activity on trimethylated H3 'Lys-9'. Demethylation of Lys residue generates formaldehyde and succinate. Involved in hormone-dependent transcriptional activation, by participating in recruitment to androgen-receptor target genes, resulting in H3 'Lys-9' demethylation and transcriptional activation. Involved in spermatogenesis by regulating expression of target genes such as PRM1 and TNP1 which are required for packaging and condensation of sperm chromatin. Directly regulates expression of PPARA and UCP1 and is involved in obesity resistance. The polypeptide is Lysine-specific demethylase 3A (Kdm3a) (Rattus norvegicus (Rat)).